Consider the following 1146-residue polypeptide: Activator of SKN7 protein 10 (1146 aa).

Positions 1-15 (MSDYFSSRPSQTLTP) are enriched in polar residues. Disordered regions lie at residues 1-32 (MSDY…ASSI) and 171-194 (ITDP…KVGL). Serine 344 is modified (phosphoserine). The PH domain maps to 482-606 (CIKAGYFLKK…DCTLKDASST (125 aa)). The tract at residues 553–575 (NNHHRQASDVHNSSTTTGGTAGA) is disordered. Residues 564-575 (NSSTTTGGTAGA) are compositionally biased toward low complexity. Serine 793 bears the Phosphoserine mark. Phosphothreonine is present on threonine 808. Disordered stretches follow at residues 835–854 (MATS…PQSM) and 909–982 (PVNS…TAMR). Over residues 912 to 924 (SPGSSNSESSSGG) the composition is skewed to low complexity. The span at 939–950 (YTQRNSEGSSPC) shows a compositional bias: polar residues. Serine 944 bears the Phosphoserine mark. The segment covering 958 to 968 (QQQQPLQMQPL) has biased composition (low complexity). The residue at position 969 (serine 969) is a Phosphoserine. A compositionally biased stretch (polar residues) spans 969 to 982 (SRTSSSSVNVTAMR). Threonine 1017 carries the phosphothreonine modification. A phosphoserine mark is found at serine 1070, serine 1095, and serine 1098. The segment at 1124-1146 (GIQEDDGDSTNNDTIKLNQSIYS) is disordered. Over residues 1132 to 1146 (STNNDTIKLNQSIYS) the composition is skewed to polar residues.

This sequence belongs to the RGC1 family. As to quaternary structure, component of the RNA polymerase II holoenzyme. Interacts with RPO21 and SSN8. Phosphorylated in response to various stresses. stress-induced phosphorylation is partially dependent on HOG1.

Its subcellular location is the cytoplasm. In terms of biological role, positive regulator of FPS1 glycerol channel required for the glycerol efflux. As a component of the RNA polymerase II holoenzyme, is required for SSN8 destruction in response to oxidative stress but not heat shock. Required for cell survival in response to heat shock independent of SSN8. This is Activator of SKN7 protein 10 (ASK10) from Saccharomyces cerevisiae (strain ATCC 204508 / S288c) (Baker's yeast).